Reading from the N-terminus, the 117-residue chain is MTRAKSGKISKNRHKKILKLAKGYRGRANSCFRVAIEKVEKALQYAYRDRRNRKRDFRGLWIQRINAAVREHGLVYSQFMGALKKTEIDIDRKVLAELAVNNSDGFVSIVEKAKAHI.

It belongs to the bacterial ribosomal protein bL20 family.

Its function is as follows. Binds directly to 23S ribosomal RNA and is necessary for the in vitro assembly process of the 50S ribosomal subunit. It is not involved in the protein synthesizing functions of that subunit. The protein is Large ribosomal subunit protein bL20 of Rickettsia africae (strain ESF-5).